The primary structure comprises 697 residues: DNA ligase (697 aa).

NAD(+)-binding positions include 44 to 48 (DGEFD), 93 to 94 (SL), and glutamate 123. Lysine 125 (N6-AMP-lysine intermediate) is an active-site residue. The NAD(+) site is built by arginine 146, glutamate 186, lysine 302, and lysine 326. Residues cysteine 420, cysteine 423, cysteine 439, and cysteine 445 each coordinate Zn(2+). The region spanning 609–697 (SIPRNLEGLS…GPDAVTDSGV (89 aa)) is the BRCT domain.

Belongs to the NAD-dependent DNA ligase family. LigA subfamily. It depends on Mg(2+) as a cofactor. Requires Mn(2+) as cofactor.

The catalysed reaction is NAD(+) + (deoxyribonucleotide)n-3'-hydroxyl + 5'-phospho-(deoxyribonucleotide)m = (deoxyribonucleotide)n+m + AMP + beta-nicotinamide D-nucleotide.. Its function is as follows. DNA ligase that catalyzes the formation of phosphodiester linkages between 5'-phosphoryl and 3'-hydroxyl groups in double-stranded DNA using NAD as a coenzyme and as the energy source for the reaction. It is essential for DNA replication and repair of damaged DNA. This Rhodococcus opacus (strain B4) protein is DNA ligase.